Here is a 269-residue protein sequence, read N- to C-terminus: Energy-coupling factor transporter ATP-binding protein EcfA1 (269 aa).

Positions 8–242 (ITFNHVRFKY…GDGLTEIGLD (235 aa)) constitute an ABC transporter domain. ATP is bound at residue 42 to 49 (GHNGSGKS).

This sequence belongs to the ABC transporter superfamily. Energy-coupling factor EcfA family. As to quaternary structure, forms a stable energy-coupling factor (ECF) transporter complex composed of 2 membrane-embedded substrate-binding proteins (S component), 2 ATP-binding proteins (A component) and 2 transmembrane proteins (T component).

The protein resides in the cell membrane. In terms of biological role, ATP-binding (A) component of a common energy-coupling factor (ECF) ABC-transporter complex. Unlike classic ABC transporters this ECF transporter provides the energy necessary to transport a number of different substrates. This is Energy-coupling factor transporter ATP-binding protein EcfA1 from Staphylococcus saprophyticus subsp. saprophyticus (strain ATCC 15305 / DSM 20229 / NCIMB 8711 / NCTC 7292 / S-41).